The primary structure comprises 717 residues: Polyribonucleotide nucleotidyltransferase (717 aa).

Residues Asp486 and Asp492 each contribute to the Mg(2+) site. Residues 553–612 (PKIVQLQIDIDKISLVIGSTGKTVKAITDEFEVRVQIEQDGRITLFGTDSLKMQKAKAKI) form the KH domain. The region spanning 622 to 715 (GEIYDGIVKK…KFGKIELELV (94 aa)) is the S1 motif domain. Residues 659–689 (RYGDMRHSRYGSGRHSRYGRDNRNTFGMNPP) form a disordered region. Basic residues predominate over residues 666-675 (SRYGSGRHSR).

It belongs to the polyribonucleotide nucleotidyltransferase family. Mg(2+) serves as cofactor.

The protein resides in the cytoplasm. The catalysed reaction is RNA(n+1) + phosphate = RNA(n) + a ribonucleoside 5'-diphosphate. Its function is as follows. Involved in mRNA degradation. Catalyzes the phosphorolysis of single-stranded polyribonucleotides processively in the 3'- to 5'-direction. In Borrelia hermsii (strain HS1 / DAH), this protein is Polyribonucleotide nucleotidyltransferase.